The chain runs to 518 residues: 4-trimethylaminobutyraldehyde dehydrogenase B (518 aa).

Residues Lys204 and 256 to 260 contribute to the NAD(+) site; that span reads GSVPT. Glu278 serves as the catalytic Proton acceptor. Catalysis depends on Cys312, which acts as the Nucleophile. An NAD(+)-binding site is contributed by Glu415.

The protein belongs to the aldehyde dehydrogenase family. Homotetramer.

It localises to the cytoplasm. Its subcellular location is the cytosol. It carries out the reaction 4-(trimethylamino)butanal + NAD(+) + H2O = 4-(trimethylamino)butanoate + NADH + 2 H(+). The catalysed reaction is an aldehyde + NAD(+) + H2O = a carboxylate + NADH + 2 H(+). Its pathway is amine and polyamine biosynthesis; carnitine biosynthesis. Functionally, converts gamma-trimethylaminobutyraldehyde into gamma-butyrobetaine with high efficiency (in vitro). Can catalyze the irreversible oxidation of a broad range of aldehydes to the corresponding acids in an NAD-dependent reaction, but with low efficiency. This chain is 4-trimethylaminobutyraldehyde dehydrogenase B (aldh9a1b), found in Danio rerio (Zebrafish).